The following is a 297-amino-acid chain: Ribosome production factor 2 homolog (297 aa).

Residues 28–232 (KKALFCRGAK…VMRKKLADDA (205 aa)) form the Brix domain.

Belongs to the RPF2 family.

It is found in the nucleus. The protein resides in the nucleolus. In Caenorhabditis elegans, this protein is Ribosome production factor 2 homolog.